The following is a 422-amino-acid chain: Tyrosine--tRNA ligase (422 aa).

Residue Tyr37 participates in L-tyrosine binding. A 'HIGH' region motif is present at residues 42–51; that stretch reads PTEESLHIGH. Tyr175 and Gln179 together coordinate L-tyrosine. Residues 235–239 carry the 'KMSKS' region motif; that stretch reads KFGKT. Lys238 is an ATP binding site. The 58-residue stretch at 357 to 414 folds into the S4 RNA-binding domain; the sequence is KDLQEALVLTSLAQSRTQAKNMIISNSISINTEKIRKNHIFHEKDKLFGKFTLLSRGK.

The protein belongs to the class-I aminoacyl-tRNA synthetase family. TyrS type 1 subfamily. Homodimer.

It is found in the cytoplasm. It carries out the reaction tRNA(Tyr) + L-tyrosine + ATP = L-tyrosyl-tRNA(Tyr) + AMP + diphosphate + H(+). Its function is as follows. Catalyzes the attachment of tyrosine to tRNA(Tyr) in a two-step reaction: tyrosine is first activated by ATP to form Tyr-AMP and then transferred to the acceptor end of tRNA(Tyr). This is Tyrosine--tRNA ligase from Buchnera aphidicola subsp. Acyrthosiphon pisum (strain APS) (Acyrthosiphon pisum symbiotic bacterium).